Consider the following 665-residue polypeptide: DNA ligase (665 aa).

Residues 35–39 (DAIYD), 88–89 (SL), and E117 contribute to the NAD(+) site. K119 acts as the N6-AMP-lysine intermediate in catalysis. The NAD(+) site is built by R140, E174, K290, and K314. Residues C406, C409, C424, and C429 each coordinate Zn(2+). Residues 588–665 (KKTERFAQLS…EEAFNELLVS (78 aa)) enclose the BRCT domain.

It belongs to the NAD-dependent DNA ligase family. LigA subfamily. The cofactor is Mg(2+). Mn(2+) is required as a cofactor.

The enzyme catalyses NAD(+) + (deoxyribonucleotide)n-3'-hydroxyl + 5'-phospho-(deoxyribonucleotide)m = (deoxyribonucleotide)n+m + AMP + beta-nicotinamide D-nucleotide.. Functionally, DNA ligase that catalyzes the formation of phosphodiester linkages between 5'-phosphoryl and 3'-hydroxyl groups in double-stranded DNA using NAD as a coenzyme and as the energy source for the reaction. It is essential for DNA replication and repair of damaged DNA. The protein is DNA ligase of Metamycoplasma arthritidis (strain 158L3-1) (Mycoplasma arthritidis).